Reading from the N-terminus, the 279-residue chain is Large ribosomal subunit protein uL2 (279 aa).

Composition is skewed to basic residues over residues 211-221 and 256-279; these read GRSRWRGKTPH and SYGKKTRDKKKPSTKFIVRGRKGK. Residues 211–279 form a disordered region; that stretch reads GRSRWRGKTP…KFIVRGRKGK (69 aa).

This sequence belongs to the universal ribosomal protein uL2 family. In terms of assembly, part of the 50S ribosomal subunit. Forms a bridge to the 30S subunit in the 70S ribosome.

Its function is as follows. One of the primary rRNA binding proteins. Required for association of the 30S and 50S subunits to form the 70S ribosome, for tRNA binding and peptide bond formation. It has been suggested to have peptidyltransferase activity; this is somewhat controversial. Makes several contacts with the 16S rRNA in the 70S ribosome. The polypeptide is Large ribosomal subunit protein uL2 (Oenococcus oeni (strain ATCC BAA-331 / PSU-1)).